The following is a 611-amino-acid chain: MLAYTHGTWLLLLLLLVAGACARPEIAHTPDPAALGEESTPHAHAHPQARHHHHAHPHAPLKEDEQGTAIPAPILTTDNVGIGETTTASSLAETQSMSDPGSVTDTTSTSTSHSTSTTSTTSPAPLPPAAPEQPEYLKHCFYAEEQLCGHTFDGRAETSEGQGSTVAQSEAQNRGGQGNSQCQCREHPTRPNSWYCCNISQLTMISSCSNISKWTNLHVRNMTVEDMDLSNPIFRSLQSLAVTDGNITRLVNAFPRLSALKCLNISNNNISEIHSRAVKDVPHLEFFGMSNNNLSLVPHRNQNKNITLDISGNMRMLCTPLNEIIYTESINFLNPKHSYCQYNATHTWFQSTDKVSVEQLENRKRCVTNCPVIPNYGSCNCTLENIMIIQDNQSKPQCHVDCSNLGLVELPQRLPDNTFMLNITNNKITSLGDYFHTNPTYHNINRLLADNNQISSIYEFEGTKFIETFQRIYMRNNSLSKIPEYFLNNALMDSGLGRRIYLAGNKLQCDCNSAKTLQNWLKERSSDIPDYMEIRCRNMPQRVIELQEAKLCQSPPDWTDYIYYLIAAEVLLLLALITKVSYDYWVFKTAGYLPWPASKMPKLPCDWLCES.

Residues 1–22 (MLAYTHGTWLLLLLLLVAGACA) form the signal peptide. Disordered stretches follow at residues 31-64 (DPAALGEESTPHAHAHPQARHHHHAHPHAPLKED), 90-132 (SLAE…AAPE), and 154-185 (GRAETSEGQGSTVAQSEAQNRGGQGNSQCQCR). Residues 43-59 (AHAHPQARHHHHAHPHA) are compositionally biased toward basic residues. Over residues 90-101 (SLAETQSMSDPG) the composition is skewed to polar residues. Low complexity predominate over residues 102-123 (SVTDTTSTSTSHSTSTTSTTSP). Over residues 159–183 (SEGQGSTVAQSEAQNRGGQGNSQCQ) the composition is skewed to polar residues. Residues Asn221, Asn246, Asn264, and Asn269 are each glycosylated (N-linked (GlcNAc...) asparagine). 4 LRR repeats span residues 236-257 (SLQSLAVTDGNITRLVNAFPRL), 259-280 (ALKCLNISNNNISEIHSRAVKD), 283-304 (HLEFFGMSNNNLSLVPHRNQNK), and 313-334 (NMRMLCTPLNEIIYTESINFLN). In terms of domain architecture, LRRNT spans 361–416 (ENRKRCVTNCPVIPNYGSCNCTLENIMIIQDNQSKPQCHVDCSNLGLVELPQRLPD). 3 LRR repeats span residues 417–438 (NTFMLNITNNKITSLGDYFHTN), 443–464 (NINRLLADNNQISSIYEFEGTK), and 468–489 (TFQRIYMRNNSLSKIPEYFLNN). One can recognise an LRRCT domain in the interval 505 to 554 (NKLQCDCNSAKTLQNWLKERSSDIPDYMEIRCRNMPQRVIELQEAKLCQS).

Has a role in the ecdysone induced cascade; probably indirect control of 'late' ecdysone genes. This chain is Protein halfway, found in Drosophila melanogaster (Fruit fly).